A 690-amino-acid chain; its full sequence is Protein arginine N-methyltransferase 7 (690 aa).

2 consecutive SAM-dependent MTase PRMT-type domains span residues 14–357 (QNSW…YSLW) and 366–690 (TKSV…QKKL).

Belongs to the class I-like SAM-binding methyltransferase superfamily. Protein arginine N-methyltransferase family. PRMT7 subfamily.

Essential arginine methyltransferase that can both catalyze the formation of omega-N monomethylarginine (MMA) and symmetrical dimethylarginine (sDMA). Specifically mediates the symmetrical dimethylation of arginine residues in the small nuclear ribonucleoproteins SmD1 and SmD3. The chain is Protein arginine N-methyltransferase 7 (Art7) from Drosophila yakuba (Fruit fly).